A 93-amino-acid polypeptide reads, in one-letter code: Small ribosomal subunit protein uS19c (93 aa).

Positions glutamate 73 to proline 93 are disordered. The span at phenylalanine 80–proline 93 shows a compositional bias: basic residues.

Belongs to the universal ribosomal protein uS19 family.

It is found in the plastid. It localises to the chloroplast. In terms of biological role, protein S19 forms a complex with S13 that binds strongly to the 16S ribosomal RNA. This Mesostigma viride (Green alga) protein is Small ribosomal subunit protein uS19c (rps19).